A 359-amino-acid chain; its full sequence is uncharacterized protein (359 aa).

A signal peptide spans Met-1 to Gly-17. Cys-18 carries N-palmitoyl cysteine lipidation. A lipid anchor (S-diacylglycerol cysteine) is attached at Cys-18.

Its subcellular location is the cell membrane. This is an uncharacterized protein from Synechococcus sp. (strain ATCC 27144 / PCC 6301 / SAUG 1402/1) (Anacystis nidulans).